Consider the following 412-residue polypeptide: Tyrosine--tRNA ligase (412 aa).

Position 31 (Tyr31) interacts with L-tyrosine. Residues 36–45 carry the 'HIGH' region motif; sequence PTAPSLHIGH. L-tyrosine contacts are provided by Tyr162 and Gln166. The short motif at 222–226 is the 'KMSKS' region element; the sequence is KIGKT. Position 225 (Lys225) interacts with ATP. The region spanning 345–412 is the S4 RNA-binding domain; the sequence is KRWLDVVVQL…KKKKQVIDLN (68 aa).

The protein belongs to the class-I aminoacyl-tRNA synthetase family. TyrS type 1 subfamily. As to quaternary structure, homodimer.

Its subcellular location is the cytoplasm. It carries out the reaction tRNA(Tyr) + L-tyrosine + ATP = L-tyrosyl-tRNA(Tyr) + AMP + diphosphate + H(+). Catalyzes the attachment of tyrosine to tRNA(Tyr) in a two-step reaction: tyrosine is first activated by ATP to form Tyr-AMP and then transferred to the acceptor end of tRNA(Tyr). This chain is Tyrosine--tRNA ligase, found in Chlamydia muridarum (strain MoPn / Nigg).